The following is a 426-amino-acid chain: Glutamate-1-semialdehyde 2,1-aminomutase (426 aa).

N6-(pyridoxal phosphate)lysine is present on Lys-265.

It belongs to the class-III pyridoxal-phosphate-dependent aminotransferase family. HemL subfamily. In terms of assembly, homodimer. Requires pyridoxal 5'-phosphate as cofactor.

It is found in the cytoplasm. It catalyses the reaction (S)-4-amino-5-oxopentanoate = 5-aminolevulinate. The protein operates within porphyrin-containing compound metabolism; protoporphyrin-IX biosynthesis; 5-aminolevulinate from L-glutamyl-tRNA(Glu): step 2/2. The protein is Glutamate-1-semialdehyde 2,1-aminomutase of Escherichia coli O81 (strain ED1a).